Reading from the N-terminus, the 258-residue chain is Type III pantothenate kinase (258 aa).

6-13 serves as a coordination point for ATP; sequence DIGNTNTV. Substrate contacts are provided by residues tyrosine 100 and 107 to 110; that span reads GADR. Catalysis depends on aspartate 109, which acts as the Proton acceptor. Aspartate 129 contributes to the K(+) binding site. Threonine 132 serves as a coordination point for ATP. A substrate-binding site is contributed by threonine 185.

This sequence belongs to the type III pantothenate kinase family. In terms of assembly, homodimer. The cofactor is NH4(+). Requires K(+) as cofactor.

The protein resides in the cytoplasm. It carries out the reaction (R)-pantothenate + ATP = (R)-4'-phosphopantothenate + ADP + H(+). It participates in cofactor biosynthesis; coenzyme A biosynthesis; CoA from (R)-pantothenate: step 1/5. Its function is as follows. Catalyzes the phosphorylation of pantothenate (Pan), the first step in CoA biosynthesis. The chain is Type III pantothenate kinase from Syntrophobacter fumaroxidans (strain DSM 10017 / MPOB).